Consider the following 195-residue polypeptide: UPF0157 protein BH1888 (195 aa).

The span at 1 to 12 (MPPMKDSSNSTP) shows a compositional bias: polar residues. Positions 1–21 (MPPMKDSSNSTPRTDEELQEV) are disordered.

Belongs to the UPF0157 (GrpB) family.

This chain is UPF0157 protein BH1888, found in Halalkalibacterium halodurans (strain ATCC BAA-125 / DSM 18197 / FERM 7344 / JCM 9153 / C-125) (Bacillus halodurans).